The sequence spans 175 residues: NADH-ubiquinone oxidoreductase chain 6 (175 aa).

Helical transmembrane passes span 1–21 (MMMY…VGVS), 25–45 (SPIY…GVIL), 47–67 (FGGS…MLVV), 88–108 (VVLG…IYAL), and 149–169 (YGVW…VIIM).

Belongs to the complex I subunit 6 family. In terms of assembly, core subunit of respiratory chain NADH dehydrogenase (Complex I) which is composed of 45 different subunits.

The protein resides in the mitochondrion inner membrane. The catalysed reaction is a ubiquinone + NADH + 5 H(+)(in) = a ubiquinol + NAD(+) + 4 H(+)(out). In terms of biological role, core subunit of the mitochondrial membrane respiratory chain NADH dehydrogenase (Complex I) which catalyzes electron transfer from NADH through the respiratory chain, using ubiquinone as an electron acceptor. Essential for the catalytic activity and assembly of complex I. This Balaenoptera physalus (Fin whale) protein is NADH-ubiquinone oxidoreductase chain 6 (MT-ND6).